Consider the following 874-residue polypeptide: Alanine--tRNA ligase (874 aa).

Zn(2+)-binding residues include histidine 562, histidine 566, cysteine 665, and histidine 669.

It belongs to the class-II aminoacyl-tRNA synthetase family. Zn(2+) serves as cofactor.

The protein resides in the cytoplasm. The enzyme catalyses tRNA(Ala) + L-alanine + ATP = L-alanyl-tRNA(Ala) + AMP + diphosphate. Functionally, catalyzes the attachment of alanine to tRNA(Ala) in a two-step reaction: alanine is first activated by ATP to form Ala-AMP and then transferred to the acceptor end of tRNA(Ala). Also edits incorrectly charged Ser-tRNA(Ala) and Gly-tRNA(Ala) via its editing domain. The sequence is that of Alanine--tRNA ligase from Pseudomonas savastanoi pv. phaseolicola (strain 1448A / Race 6) (Pseudomonas syringae pv. phaseolicola (strain 1448A / Race 6)).